Reading from the N-terminus, the 129-residue chain is MNSSTALMCFALLLISPLCMGYSDEDREADSRRIGEIIQNAQDDDSKINSTQELLDIYRRLYPSLSLEDRENIDKFVNEHTDAIVIDGVPIQGGRKAKIIGKIVSPAAKGLAVGFFEELGSKIAQLFTG.

Positions 1–21 (MNSSTALMCFALLLISPLCMG) are cleaved as a signal peptide. Asn-49 is a glycosylation site (N-linked (GlcNAc...) asparagine).

Belongs to the Turandot family.

Its subcellular location is the secreted. Its function is as follows. A humoral factor that plays a role in stress tolerance; gives increased resistance to the lethal effects of bacterial challenge and stress. Regulated by the JAK/STAT pathway and NF-KB-like Relish pathway in the fat body, upd3 in the hemocytes and Mekk1 in response to septic injury and consequent immune response. The polypeptide is Protein Turandot A1 (TotA1) (Drosophila simulans (Fruit fly)).